We begin with the raw amino-acid sequence, 449 residues long: Glucose-6-phosphate isomerase (449 aa).

E291 (proton donor) is an active-site residue. Residues H312 and K426 contribute to the active site.

Belongs to the GPI family.

The protein resides in the cytoplasm. It catalyses the reaction alpha-D-glucose 6-phosphate = beta-D-fructose 6-phosphate. It functions in the pathway carbohydrate biosynthesis; gluconeogenesis. Its pathway is carbohydrate degradation; glycolysis; D-glyceraldehyde 3-phosphate and glycerone phosphate from D-glucose: step 2/4. Functionally, catalyzes the reversible isomerization of glucose-6-phosphate to fructose-6-phosphate. The protein is Glucose-6-phosphate isomerase of Streptococcus pyogenes serotype M2 (strain MGAS10270).